Here is a 138-residue protein sequence, read N- to C-terminus: Basic phospholipase A2 RV-4 (138 aa).

Positions 1–16 (MRTLWIVAVCLIGVEG) are cleaved as a signal peptide. Cystine bridges form between cysteine 42–cysteine 131, cysteine 44–cysteine 60, cysteine 59–cysteine 111, cysteine 65–cysteine 138, cysteine 66–cysteine 104, cysteine 73–cysteine 97, and cysteine 91–cysteine 102. Residues tyrosine 43, glycine 45, and glycine 47 each contribute to the Ca(2+) site. The active site involves histidine 63. Aspartate 64 is a binding site for Ca(2+). Aspartate 105 is a catalytic residue.

Belongs to the phospholipase A2 family. Group II subfamily. D49 sub-subfamily. As to quaternary structure, heterodimer of a weakly toxic basic protein having phospholipase A2 activity (RV-4) and a non-toxic acidic protein which inhibits its enzymatic activity but potentiates its lethal potency and neurotoxicity (RV-7). Ca(2+) serves as cofactor. In terms of tissue distribution, expressed by the venom gland.

The protein localises to the secreted. The catalysed reaction is a 1,2-diacyl-sn-glycero-3-phosphocholine + H2O = a 1-acyl-sn-glycero-3-phosphocholine + a fatty acid + H(+). Heterodimer RV-4/RV-7: acts as a presynaptic neurotoxin. In terms of biological role, monomer: snake venom phospholipase A2 (PLA2) that acts as a presynaptic neurotoxin. PLA2 catalyzes the calcium-dependent hydrolysis of the 2-acyl groups in 3-sn-phosphoglycerides. In Daboia siamensis (Eastern Russel's viper), this protein is Basic phospholipase A2 RV-4.